Here is a 920-residue protein sequence, read N- to C-terminus: Nitrate reductase [NADH] (920 aa).

Residues 1–69 (MAASVENRQF…DTSDDEEDEA (69 aa)) form a disordered region. The span at 60-69 (DTSDDEEDEA) shows a compositional bias: acidic residues. Cys-185 is a Mo-molybdopterin binding site. Positions 534 to 609 (SLTFTMSEVK…LEEYRVGELI (76 aa)) constitute a Cytochrome b5 heme-binding domain. Residues His-569 and His-592 each contribute to the heme site. The FAD-binding FR-type domain occupies 663 to 775 (REKIPCKLIS…KGPLGHIEYM (113 aa)). Residues 715–718 (RAYT), 732–736 (LVKIY), Phe-737, Phe-744, 749–751 (LMS), and Thr-802 each bind FAD.

The protein belongs to the nitrate reductase family. In terms of assembly, homodimer. The cofactor is FAD. Requires heme as cofactor. Mo-molybdopterin is required as a cofactor. As to expression, in cortical cells of roots grown at low nitrate concentrations, in vascular tissues of roots at high nitrate concentrations and in root apex under both conditions.

It carries out the reaction nitrite + NAD(+) + H2O = nitrate + NADH + H(+). Its function is as follows. Nitrate reductase is a key enzyme involved in the first step of nitrate assimilation in plants, fungi and bacteria. This Cichorium intybus (Chicory) protein is Nitrate reductase [NADH] (NIA).